The following is a 348-amino-acid chain: Small ribosomal subunit biogenesis GTPase RsgA (348 aa).

In terms of domain architecture, CP-type G spans 72–230 (RNQLSRPAIA…IADTPGFNQP (159 aa)). GTP-binding positions include 121–124 (TKAD) and 172–180 (GPSGVGKSS). C255, C260, H262, and C268 together coordinate Zn(2+). The span at 305–322 (AKSDRQGQQRLEPLLDAK) shows a compositional bias: basic and acidic residues. A disordered region spans residues 305–348 (AKSDRQGQQRLEPLLDAKKYRRRSRRQQHQHVNPMAEEVLDSEW). Residues 323-333 (KYRRRSRRQQH) show a composition bias toward basic residues.

This sequence belongs to the TRAFAC class YlqF/YawG GTPase family. RsgA subfamily. In terms of assembly, monomer. Associates with 30S ribosomal subunit, binds 16S rRNA. Zn(2+) serves as cofactor.

The protein localises to the cytoplasm. Its function is as follows. One of several proteins that assist in the late maturation steps of the functional core of the 30S ribosomal subunit. Helps release RbfA from mature subunits. May play a role in the assembly of ribosomal proteins into the subunit. Circularly permuted GTPase that catalyzes slow GTP hydrolysis, GTPase activity is stimulated by the 30S ribosomal subunit. In Thermosynechococcus vestitus (strain NIES-2133 / IAM M-273 / BP-1), this protein is Small ribosomal subunit biogenesis GTPase RsgA.